Consider the following 103-residue polypeptide: Isocitrate dehydrogenase [NAD] subunit beta, mitochondrial (103 aa).

This sequence belongs to the isocitrate and isopropylmalate dehydrogenases family. As to quaternary structure, heterooligomer of subunits alpha (IDH3A), beta (IDH3B), and gamma (IDH3G) in the apparent ratio of 2:1:1. The heterodimer containing one IDH3A and one IDH3B subunit and the heterodimer containing one IDH3A and one IDH3G subunit assemble into a heterotetramer (which contains two subunits of IDH3A, one of IDH3B and one of IDH3G) and further into the heterooctamer.

It localises to the mitochondrion. The heterotetramer and the heterodimer composed of IDH3A and IDH3G subunits can be allosterically activated by citrate (CIT) or/and ADP, and the two activators can act independently or synergistically. The heterodimer composed of IDH3A and IDH3B subunits cannot be allosterically regulated and the allosteric regulation of the heterotetramer is through the IDH3G subunit and not the IDH3B subunit. The IDH3G subunit contains the allosteric site which consists of a CIT-binding site and an ADP-binding site, and the binding of CIT and ADP causes conformational changes at the allosteric site which are transmitted to the active site in the catalytic subunit (IDH3A) through a cascade of conformational changes at the heterodimer interface, leading to stabilization of the isocitrate-binding at the active site and thus activation of the enzyme. ATP can activate the heterotetramer and the heterodimer composed of IDH3A and IDH3G subunits at low concentrations but inhibits their activities at high concentrations, whereas ATP exhibits only inhibitory effect on the heterodimer composed of IDH3A and IDH3B subunits. Its function is as follows. Plays a structural role to facilitate the assembly and ensure the full activity of the enzyme catalyzing the decarboxylation of isocitrate (ICT) into alpha-ketoglutarate. The heterodimer composed of the alpha (IDH3A) and beta (IDH3B) subunits and the heterodimer composed of the alpha (IDH3A) and gamma (IDH3G) subunits, have considerable basal activity but the full activity of the heterotetramer (containing two subunits of IDH3A, one of IDH3B and one of IDH3G) requires the assembly and cooperative function of both heterodimers. This chain is Isocitrate dehydrogenase [NAD] subunit beta, mitochondrial (IDH3B), found in Sus scrofa (Pig).